The following is a 957-amino-acid chain: UvrABC system protein A (957 aa).

Residue 33–40 participates in ATP binding; the sequence is GLSGSGKS. The C4-type zinc-finger motif lies at 252–279; that stretch reads CPQCGFSIPELEPRMFSFNSPFGACPTC. 2 consecutive ABC transporter domains span residues 309–587 and 607–935; these read WEPI…AKSL and PNGR…KYLR. 639–646 serves as a coordination point for ATP; it reads GVSGSGKS. Residues 738–764 form a C4-type zinc finger; that stretch reads CEACRGDGIIKIEMHFLPDVYVPCEVC.

Belongs to the ABC transporter superfamily. UvrA family. As to quaternary structure, forms a heterotetramer with UvrB during the search for lesions.

It localises to the cytoplasm. Its function is as follows. The UvrABC repair system catalyzes the recognition and processing of DNA lesions. UvrA is an ATPase and a DNA-binding protein. A damage recognition complex composed of 2 UvrA and 2 UvrB subunits scans DNA for abnormalities. When the presence of a lesion has been verified by UvrB, the UvrA molecules dissociate. This Halalkalibacterium halodurans (strain ATCC BAA-125 / DSM 18197 / FERM 7344 / JCM 9153 / C-125) (Bacillus halodurans) protein is UvrABC system protein A.